Here is a 331-residue protein sequence, read N- to C-terminus: MTDATIYYDDDAESTVLDDKTVAVLGYGSQGHAHAQNLDDSGVDVVVGLREDSSSRSAAEADGLDVATPRGAAEQADLVSVLVPDTVQPAVYEQIEDVLQPGDTLQFAHGFNIHYGQIEPSEDVNVTMVAPKSPGHLVRRNYENDEGTPGLLAVYQDPSGEAHDLGLAYAKAIGCTRAGVVETTFREETETDLFGEQAVLCGGVTSLVKTGYETLVDAGYSPEMAYFECLNELKLIVDLMYEGGNSEMWDSVSDTAEYGGLTRGDRIVDDHAREKMEEVLEEVQNGTFAREWISENQAGRPSYKQLRAAEKNHDIEAVGEDLRALFAWGDD.

Residues 4–183 (ATIYYDDDAE…GCTRAGVVET (180 aa)) enclose the KARI N-terminal Rossmann domain. Residues 27–30 (YGSQ), R50, S53, S55, and 85–88 (DTVQ) each bind NADP(+). H109 is a catalytic residue. G135 lines the NADP(+) pocket. In terms of domain architecture, KARI C-terminal knotted spans 184 to 329 (TFREETETDL…EDLRALFAWG (146 aa)). Mg(2+) is bound by residues D192, E196, E228, and E232. S253 contributes to the substrate binding site.

This sequence belongs to the ketol-acid reductoisomerase family. Requires Mg(2+) as cofactor.

The enzyme catalyses (2R)-2,3-dihydroxy-3-methylbutanoate + NADP(+) = (2S)-2-acetolactate + NADPH + H(+). It catalyses the reaction (2R,3R)-2,3-dihydroxy-3-methylpentanoate + NADP(+) = (S)-2-ethyl-2-hydroxy-3-oxobutanoate + NADPH + H(+). The protein operates within amino-acid biosynthesis; L-isoleucine biosynthesis; L-isoleucine from 2-oxobutanoate: step 2/4. It functions in the pathway amino-acid biosynthesis; L-valine biosynthesis; L-valine from pyruvate: step 2/4. Functionally, involved in the biosynthesis of branched-chain amino acids (BCAA). Catalyzes an alkyl-migration followed by a ketol-acid reduction of (S)-2-acetolactate (S2AL) to yield (R)-2,3-dihydroxy-isovalerate. In the isomerase reaction, S2AL is rearranged via a Mg-dependent methyl migration to produce 3-hydroxy-3-methyl-2-ketobutyrate (HMKB). In the reductase reaction, this 2-ketoacid undergoes a metal-dependent reduction by NADPH to yield (R)-2,3-dihydroxy-isovalerate. In Natronomonas pharaonis (strain ATCC 35678 / DSM 2160 / CIP 103997 / JCM 8858 / NBRC 14720 / NCIMB 2260 / Gabara) (Halobacterium pharaonis), this protein is Ketol-acid reductoisomerase (NADP(+)).